The following is a 143-amino-acid chain: Transcriptional regulator MraZ (143 aa).

2 SpoVT-AbrB domains span residues 5–47 (EYRH…PQVE) and 76–119 (ATEC…SKEL).

The protein belongs to the MraZ family. As to quaternary structure, forms oligomers.

The protein localises to the cytoplasm. The protein resides in the nucleoid. The chain is Transcriptional regulator MraZ from Halalkalibacterium halodurans (strain ATCC BAA-125 / DSM 18197 / FERM 7344 / JCM 9153 / C-125) (Bacillus halodurans).